The sequence spans 309 residues: Homoserine kinase (309 aa).

91-101 (PIGSGLGSSAC) contacts ATP.

Belongs to the GHMP kinase family. Homoserine kinase subfamily.

Its subcellular location is the cytoplasm. The enzyme catalyses L-homoserine + ATP = O-phospho-L-homoserine + ADP + H(+). It participates in amino-acid biosynthesis; L-threonine biosynthesis; L-threonine from L-aspartate: step 4/5. Its function is as follows. Catalyzes the ATP-dependent phosphorylation of L-homoserine to L-homoserine phosphate. This Cronobacter sakazakii (strain ATCC BAA-894) (Enterobacter sakazakii) protein is Homoserine kinase.